Reading from the N-terminus, the 299-residue chain is Glycine--tRNA ligase alpha subunit (299 aa).

Belongs to the class-II aminoacyl-tRNA synthetase family. As to quaternary structure, tetramer of two alpha and two beta subunits.

It localises to the cytoplasm. The enzyme catalyses tRNA(Gly) + glycine + ATP = glycyl-tRNA(Gly) + AMP + diphosphate. The chain is Glycine--tRNA ligase alpha subunit from Dichelobacter nodosus (strain VCS1703A).